Reading from the N-terminus, the 176-residue chain is Adenylyl-sulfate kinase (176 aa).

Residue Gly-12–Thr-19 coordinates ATP. Ser-86 (phosphoserine intermediate) is an active-site residue.

It belongs to the APS kinase family.

It catalyses the reaction adenosine 5'-phosphosulfate + ATP = 3'-phosphoadenylyl sulfate + ADP + H(+). It participates in sulfur metabolism; hydrogen sulfide biosynthesis; sulfite from sulfate: step 2/3. Catalyzes the synthesis of activated sulfate. The protein is Adenylyl-sulfate kinase of Synechococcus sp. (strain JA-3-3Ab) (Cyanobacteria bacterium Yellowstone A-Prime).